The sequence spans 60 residues: Kunitz-type serine protease inhibitor 2 (60 aa).

Residues 7 to 57 (CNLAPESGRCRGHLRRIYYNLESNKCKVFFYGGCGGNANNFETRDECRETC) form the BPTI/Kunitz inhibitor domain. Intrachain disulfides connect Cys7–Cys57, Cys16–Cys40, and Cys32–Cys53.

Belongs to the venom Kunitz-type family. Expressed by the venom gland.

It is found in the secreted. In terms of biological role, serine protease inhibitor. The chain is Kunitz-type serine protease inhibitor 2 from Daboia siamensis (Eastern Russel's viper).